Reading from the N-terminus, the 159-residue chain is Ribosomal RNA large subunit methyltransferase H (159 aa).

Residues Leu76, Gly108, and 127–132 (FGLLTF) each bind S-adenosyl-L-methionine.

It belongs to the RNA methyltransferase RlmH family. Homodimer.

The protein localises to the cytoplasm. It catalyses the reaction pseudouridine(1915) in 23S rRNA + S-adenosyl-L-methionine = N(3)-methylpseudouridine(1915) in 23S rRNA + S-adenosyl-L-homocysteine + H(+). Specifically methylates the pseudouridine at position 1915 (m3Psi1915) in 23S rRNA. The protein is Ribosomal RNA large subunit methyltransferase H of Streptococcus thermophilus (strain ATCC BAA-491 / LMD-9).